Consider the following 408-residue polypeptide: Multidrug resistance protein MdtG (408 aa).

The next 11 membrane-spanning stretches (helical) occupy residues 16-36 (LIVA…VMPF), 58-78 (IVFS…GGLA), 92-112 (LGMG…QFLI), 115-135 (ALLG…ATQV), 146-166 (TLST…GLLA), 173-193 (PVFF…LFCI), 224-244 (LFVT…ILTL), 256-276 (VAFI…LSAP), 290-310 (ILIT…YVQT), 319-339 (FLLG…LVYN), and 378-398 (AVFL…WNSL).

This sequence belongs to the major facilitator superfamily. DHA1 family. MdtG (TC 2.A.1.2.20) subfamily.

The protein localises to the cell inner membrane. Functionally, confers resistance to fosfomycin and deoxycholate. In Escherichia coli O6:K15:H31 (strain 536 / UPEC), this protein is Multidrug resistance protein MdtG.